A 175-amino-acid chain; its full sequence is Universal stress protein A-like protein (175 aa).

Ala11, Val12, Asn13, Ser26, Cys27, Val53, Gly131, Arg133, Thr145, Val146, and Ser147 together coordinate AMP.

This sequence belongs to the universal stress protein A family. In terms of assembly, homohexamer.

The chain is Universal stress protein A-like protein from Arabidopsis thaliana (Mouse-ear cress).